The sequence spans 349 residues: Phenylalanine--tRNA ligase alpha subunit (349 aa).

Residue Glu259 participates in Mg(2+) binding.

This sequence belongs to the class-II aminoacyl-tRNA synthetase family. Phe-tRNA synthetase alpha subunit type 1 subfamily. As to quaternary structure, tetramer of two alpha and two beta subunits. Mg(2+) serves as cofactor.

It localises to the cytoplasm. It carries out the reaction tRNA(Phe) + L-phenylalanine + ATP = L-phenylalanyl-tRNA(Phe) + AMP + diphosphate + H(+). The protein is Phenylalanine--tRNA ligase alpha subunit of Lactobacillus helveticus (strain DPC 4571).